Here is a 591-residue protein sequence, read N- to C-terminus: Aspartate--tRNA(Asp/Asn) ligase (591 aa).

Glu-174 contributes to the L-aspartate binding site. An aspartate region spans residues 198-201; it reads QLFK. Arg-220 is a binding site for L-aspartate. ATP contacts are provided by residues 220-222 and Gln-229; that span reads RDE. His-450 provides a ligand contact to L-aspartate. Residue Glu-483 coordinates ATP. Arg-490 serves as a coordination point for L-aspartate. Position 535 to 538 (535 to 538) interacts with ATP; it reads GLDR.

This sequence belongs to the class-II aminoacyl-tRNA synthetase family. Type 1 subfamily. As to quaternary structure, homodimer.

The protein resides in the cytoplasm. It carries out the reaction tRNA(Asx) + L-aspartate + ATP = L-aspartyl-tRNA(Asx) + AMP + diphosphate. Its function is as follows. Aspartyl-tRNA synthetase with relaxed tRNA specificity since it is able to aspartylate not only its cognate tRNA(Asp) but also tRNA(Asn). Reaction proceeds in two steps: L-aspartate is first activated by ATP to form Asp-AMP and then transferred to the acceptor end of tRNA(Asp/Asn). This chain is Aspartate--tRNA(Asp/Asn) ligase, found in Pseudomonas savastanoi pv. phaseolicola (strain 1448A / Race 6) (Pseudomonas syringae pv. phaseolicola (strain 1448A / Race 6)).